Here is a 60-residue protein sequence, read N- to C-terminus: ATP synthase subunit J, mitochondrial (60 aa).

Residues 13 to 32 (ILKPMLPFFLGGAIVFYGTV) traverse the membrane as a helical segment.

It belongs to the ATPase j subunit family. As to quaternary structure, F-type ATPases have 2 components, CF(1) - the catalytic core - and CF(0) - the membrane proton channel. In yeast, the dimeric form of ATP synthase consists of 17 polypeptides: alpha, beta, gamma, delta, epsilon, 4 (B), 5 (OSCP), 6 (A), 8, 9 (C), d, E (Tim11), f, g, h, i/j and k.

The protein resides in the mitochondrion membrane. Mitochondrial membrane ATP synthase (F(1)F(0) ATP synthase or Complex V) produces ATP from ADP in the presence of a proton gradient across the membrane which is generated by electron transport complexes of the respiratory chain. F-type ATPases consist of two structural domains, F(1) - containing the extramembraneous catalytic core and F(0) - containing the membrane proton channel, linked together by a central stalk and a peripheral stalk. During catalysis, ATP synthesis in the catalytic domain of F(1) is coupled via a rotary mechanism of the central stalk subunits to proton translocation. Part of the complex F(0) domain. Minor subunit located with subunit a in the membrane. This chain is ATP synthase subunit J, mitochondrial (atp18), found in Schizosaccharomyces pombe (strain 972 / ATCC 24843) (Fission yeast).